The following is a 350-amino-acid chain: Hydroxymethylglutaryl-CoA synthase (350 aa).

Asp-30 lines the (3S)-3-hydroxy-3-methylglutaryl-CoA pocket. Catalysis depends on Glu-82, which acts as the Proton donor/acceptor. (3S)-3-hydroxy-3-methylglutaryl-CoA is bound by residues Cys-114, Ser-155, Thr-203, and His-236. The Acyl-thioester intermediate role is filled by Cys-114. His-236 (proton donor/acceptor) is an active-site residue. Arg-241 is a binding site for CoA. The (3S)-3-hydroxy-3-methylglutaryl-CoA site is built by Arg-245, Asn-268, and Ser-298.

The protein belongs to the thiolase-like superfamily. Archaeal HMG-CoA synthase family. As to quaternary structure, interacts with acetoacetyl-CoA thiolase that catalyzes the precedent step in the pathway and with a DUF35 protein. The acetoacetyl-CoA thiolase/HMG-CoA synthase complex channels the intermediate via a fused CoA-binding site, which allows for efficient coupling of the endergonic thiolase reaction with the exergonic HMGCS reaction.

It carries out the reaction acetoacetyl-CoA + acetyl-CoA + H2O = (3S)-3-hydroxy-3-methylglutaryl-CoA + CoA + H(+). It functions in the pathway metabolic intermediate biosynthesis; (R)-mevalonate biosynthesis; (R)-mevalonate from acetyl-CoA: step 2/3. In terms of biological role, catalyzes the condensation of acetyl-CoA with acetoacetyl-CoA to form 3-hydroxy-3-methylglutaryl-CoA (HMG-CoA). Functions in the mevalonate (MVA) pathway leading to isopentenyl diphosphate (IPP), a key precursor for the biosynthesis of isoprenoid compounds that are building blocks of archaeal membrane lipids. This chain is Hydroxymethylglutaryl-CoA synthase, found in Pyrobaculum aerophilum (strain ATCC 51768 / DSM 7523 / JCM 9630 / CIP 104966 / NBRC 100827 / IM2).